A 471-amino-acid polypeptide reads, in one-letter code: UDP-N-acetylmuramate--L-alanine ligase (471 aa).

Residue 114-120 (GTHGKTT) coordinates ATP.

The protein belongs to the MurCDEF family.

Its subcellular location is the cytoplasm. The catalysed reaction is UDP-N-acetyl-alpha-D-muramate + L-alanine + ATP = UDP-N-acetyl-alpha-D-muramoyl-L-alanine + ADP + phosphate + H(+). It participates in cell wall biogenesis; peptidoglycan biosynthesis. In terms of biological role, cell wall formation. The protein is UDP-N-acetylmuramate--L-alanine ligase of Allorhizobium ampelinum (strain ATCC BAA-846 / DSM 112012 / S4) (Agrobacterium vitis (strain S4)).